Reading from the N-terminus, the 758-residue chain is 5-methyltetrahydropteroyltriglutamate--homocysteine methyltransferase (758 aa).

Residues 17–20 (RELK) and K110 contribute to the 5-methyltetrahydropteroyltri-L-glutamate site. L-homocysteine-binding positions include 428–430 (IGS) and E481. L-methionine contacts are provided by residues 428–430 (IGS) and E481. 5-methyltetrahydropteroyltri-L-glutamate is bound by residues 512-513 (RC) and W558. D596 provides a ligand contact to L-homocysteine. D596 contacts L-methionine. E602 serves as a coordination point for 5-methyltetrahydropteroyltri-L-glutamate. Zn(2+) contacts are provided by H638, C640, and E662. H691 acts as the Proton donor in catalysis. Position 723 (C723) interacts with Zn(2+).

It belongs to the vitamin-B12 independent methionine synthase family. Zn(2+) serves as cofactor.

It carries out the reaction 5-methyltetrahydropteroyltri-L-glutamate + L-homocysteine = tetrahydropteroyltri-L-glutamate + L-methionine. Its pathway is amino-acid biosynthesis; L-methionine biosynthesis via de novo pathway; L-methionine from L-homocysteine (MetE route): step 1/1. Functionally, catalyzes the transfer of a methyl group from 5-methyltetrahydrofolate to homocysteine resulting in methionine formation. The chain is 5-methyltetrahydropteroyltriglutamate--homocysteine methyltransferase from Thermosynechococcus vestitus (strain NIES-2133 / IAM M-273 / BP-1).